The following is a 213-amino-acid chain: Na(+)-translocating NADH-quinone reductase subunit D (213 aa).

The next 6 membrane-spanning stretches (helical) occupy residues 21–41 (PLIA…VNTA), 42–62 (ITMG…VSLL), 69–86 (SVRM…VIVI), 101–121 (LSVF…AESL), 131–151 (FLDG…VSIV), and 183–203 (FGLM…IWGV).

It belongs to the NqrDE/RnfAE family. Composed of six subunits; NqrA, NqrB, NqrC, NqrD, NqrE and NqrF.

It localises to the cell inner membrane. The catalysed reaction is a ubiquinone + n Na(+)(in) + NADH + H(+) = a ubiquinol + n Na(+)(out) + NAD(+). NQR complex catalyzes the reduction of ubiquinone-1 to ubiquinol by two successive reactions, coupled with the transport of Na(+) ions from the cytoplasm to the periplasm. NqrA to NqrE are probably involved in the second step, the conversion of ubisemiquinone to ubiquinol. The sequence is that of Na(+)-translocating NADH-quinone reductase subunit D from Chlamydia caviae (strain ATCC VR-813 / DSM 19441 / 03DC25 / GPIC) (Chlamydophila caviae).